Reading from the N-terminus, the 953-residue chain is Ubiquitin carboxyl-terminal hydrolase CYLD (953 aa).

The interval 106-590 (CEERLSLFRN…LEIMIGKKKG (485 aa)) is interaction with TRIP. CAP-Gly domains follow at residues 153–198 (LAER…VFVA) and 253–286 (DVLP…VQLC). Positions 318 to 350 (FMSRGVGDKGSSSHNKPKVTGSTSDPGSRNRSE) are disordered. Residues 327–346 (GSSSHNKPKVTGSTSDPGSR) show a composition bias toward polar residues. Phosphoserine is present on Ser-384. The segment at 387–410 (EMSSDFGHSSPPPQPPSMNSLSSE) is disordered. The segment at 391 to 466 (DFGHSSPPPQ…MPSSSGNAHG (76 aa)) is interaction with TRAF2. Ser-415 and Ser-419 each carry phosphoserine. Residues 467-681 (LEVGSLAEVK…FTSEEKDPEE (215 aa)) are interaction with IKBKG/NEMO. A CAP-Gly 3 domain is found at 489–532 (GQPPGLSDVLAGLELEDECAGCTDGTFRGTRYFTCALKKALFVK). One can recognise a USP domain in the interval 589 to 947 (KGIQGHYNSC…DAYMCMYQSP (359 aa)). Cys-598 acts as the Nucleophile in catalysis. The tract at residues 778 to 830 (LEDTPRQCRICGGLAMYECRECYDDPDISAGKIKQFCKTCSTQVHLHPRRLNH) is B-box. Residues Cys-785, Cys-788, Cys-796, Cys-799, Cys-814, Cys-817, His-822, and His-830 each contribute to the Zn(2+) site. Catalysis depends on His-868, which acts as the Proton acceptor.

This sequence belongs to the peptidase C19 family. In terms of assembly, interacts (via CAP-Gly domain) with IKBKG/NEMO (via proline-rich C-terminal region). Interacts with TRAF2 and TRIP. Interacts with PLK1, DVL1, DVL3, MAVS, TBK1, IKKE and RIGI. Interacts (via CAP-Gly domain) with microtubules. Interacts with HDAC6 and BCL3. Interacts with MAP3K7. Identified in a complex with TRAF6 and SQSTM1. Interacts with OPTN and SQSTM1. Interacts with CEP350. Interacts with RNF31; the interaction is indirect and is mediated via SPATA2. Interacts with SPATA2 (via the PUB domain); the interaction is direct and recruits CYLD to the LUBAC complex, thereby regulating TNF-alpha-induced necroptosis. Post-translationally, phosphorylated on several serine residues by IKKA and/or IKKB in response to immune stimuli. Phosphorylation requires IKBKG. Phosphorylation abolishes TRAF2 deubiquitination, interferes with the activation of Jun kinases, and strongly reduces CD40-dependent gene activation by NF-kappa-B. In terms of processing, ubiquitinated. Polyubiquitinated in hepatocytes treated with palmitic acid. Ubiquitination is mediated by E3 ligase TRIM47 and leads to proteasomal degradation.

It is found in the cytoplasm. The protein localises to the perinuclear region. It localises to the cytoskeleton. Its subcellular location is the cell membrane. The protein resides in the microtubule organizing center. It is found in the centrosome. The protein localises to the spindle. It localises to the cilium basal body. The catalysed reaction is Thiol-dependent hydrolysis of ester, thioester, amide, peptide and isopeptide bonds formed by the C-terminal Gly of ubiquitin (a 76-residue protein attached to proteins as an intracellular targeting signal).. Its function is as follows. Deubiquitinase that specifically cleaves 'Lys-63'- and linear 'Met-1'-linked polyubiquitin chains and is involved in NF-kappa-B activation and TNF-alpha-induced necroptosis. Negatively regulates NF-kappa-B activation by deubiquitinating upstream signaling factors. Contributes to the regulation of cell survival, proliferation and differentiation via its effects on NF-kappa-B activation. Negative regulator of Wnt signaling. Inhibits HDAC6 and thereby promotes acetylation of alpha-tubulin and stabilization of microtubules. Plays a role in the regulation of microtubule dynamics, and thereby contributes to the regulation of cell proliferation, cell polarization, cell migration, and angiogenesis. Required for normal cell cycle progress and normal cytokinesis. Inhibits nuclear translocation of NF-kappa-B. Plays a role in the regulation of inflammation and the innate immune response, via its effects on NF-kappa-B activation. Dispensable for the maturation of intrathymic natural killer cells, but required for the continued survival of immature natural killer cells. Negatively regulates TNFRSF11A signaling and osteoclastogenesis. Involved in the regulation of ciliogenesis, allowing ciliary basal bodies to migrate and dock to the plasma membrane; this process does not depend on NF-kappa-B activation. Ability to remove linear ('Met-1'-linked) polyubiquitin chains regulates innate immunity and TNF-alpha-induced necroptosis: recruited to the LUBAC complex via interaction with SPATA2 and restricts linear polyubiquitin formation on target proteins. Regulates innate immunity by restricting linear polyubiquitin formation on RIPK2 in response to NOD2 stimulation. Involved in TNF-alpha-induced necroptosis by removing linear ('Met-1'-linked) polyubiquitin chains from RIPK1, thereby regulating the kinase activity of RIPK1. Negatively regulates intestinal inflammation by removing 'Lys-63' linked polyubiquitin chain of NLRP6, thereby reducing the interaction between NLRP6 and PYCARD/ASC and formation of the NLRP6 inflammasome. Does not catalyze deubiquitination of heterotypic 'Lys-63'-/'Lys-48'-linked branched ubiquitin chains. Removes 'Lys-63' linked polyubiquitin chain of MAP3K7, which inhibits phosphorylation and blocks downstream activation of the JNK-p38 kinase cascades. Also removes 'Lys-63'-linked polyubiquitin chains of MAP3K1 and MA3P3K3, which inhibit their interaction with MAP2K1 and MAP2K2. This Rattus norvegicus (Rat) protein is Ubiquitin carboxyl-terminal hydrolase CYLD (Cyld).